The primary structure comprises 139 residues: Putative pre-16S rRNA nuclease (139 aa).

This sequence belongs to the YqgF nuclease family.

Its subcellular location is the cytoplasm. In terms of biological role, could be a nuclease involved in processing of the 5'-end of pre-16S rRNA. This is Putative pre-16S rRNA nuclease from Streptococcus mutans serotype c (strain ATCC 700610 / UA159).